We begin with the raw amino-acid sequence, 353 residues long: Phospho-furanose lactonase (353 aa).

Positions 24, 26, 153, 186, and 214 each coordinate Zn(2+). Position 153 is an N6-carboxylysine (lysine 153). Position 244 to 245 (244 to 245 (KY)) interacts with substrate. Aspartate 272 lines the Zn(2+) pocket. Position 275-278 (275-278 (RILY)) interacts with substrate.

The protein belongs to the metallo-dependent hydrolases superfamily. Phosphotriesterase family. The cofactor is Zn(2+).

It catalyses the reaction a 1,4-lactone + H2O = a 4-hydroxyacid + H(+). The enzyme catalyses D-xylono-1,4-lactone 5-phosphate + H2O = 5-phospho-D-xylonate + H(+). The catalysed reaction is L-arabino-1,4-lactone 5-phosphate + H2O = 5-phospho-L-arabinonate + H(+). In terms of biological role, catalyzes the hydrolysis of D-xylono-1,4-lactone-5-phosphate and L-arabino-1,4-lactone-5-phosphate. Also able to hydrolyze carboxy 1,4-lactones. The protein is Phospho-furanose lactonase of Mycoplasmopsis synoviae (strain 53) (Mycoplasma synoviae).